The following is a 449-amino-acid chain: UNC93-like protein MFSD11 (449 aa).

A helical transmembrane segment spans residues Leu8–Cys28. N-linked (GlcNAc...) asparagine glycosylation occurs at Asn40. A run of 5 helical transmembrane segments spans residues Ala53–Val73, Gly74–Asn94, Pro96–Trp116, Ile138–Trp158, and Arg170–Ile190. Position 204 is a phosphoserine (Ser204). The next 6 membrane-spanning stretches (helical) occupy residues Met239–Val259, Leu277–Gly297, Pro309–Met329, Phe359–Leu379, Ala385–Tyr405, and Leu410–Phe430.

This sequence belongs to the unc-93 family.

The protein resides in the membrane. The sequence is that of UNC93-like protein MFSD11 (MFSD11) from Pongo abelii (Sumatran orangutan).